The sequence spans 576 residues: MFYNFISKDSILYRLILCFGIGIGTVFGLSPFSFFSAGVFASISCIFLFFSLNRTSIWKAFLWLLILSQILNFTAFYWIPGAISRISGANTFVSILFFFLYGLISHLKFFLFYTLFRFSKIDSASKTYILLIFPAAGTLSDMITFQIFPWYWGNLISGSIVFEQFASICGVYGLSFLLLFISSTFLILVNYYKYKNSKEFKTSIASLICIAFIYRFGLYRIGYINQSQNELKPKNLSVLMIQPDTSPGTKDLKADASYLSATMSKVFSLAIPTFENSPSLIVIPESAIPFHGTIDSEENRKEKIYSSTMEGIILYLSKHTGADVLFNELNLDENKLRNQVSLFKNLDGKTERYNKRRLLPFGEYLPMEKNFPFLRSIFQETSRYVPGEFPKLLIGNKIQNQRSFLPPEISKLNEPKTYRYEFSSIVEHTNKIRNLEYSYSILPLLCYEAMFTELVLDYFQNEQKPEVLINITNDSWFDSELEAYQHSGAVRLRAIETGLPLIRSAVSGISEVWDARGIPMIVPIGFHETGTRAFSIRLDAIESTIYTRFGNSFLWIFCILILISRLIFVSRIERKS.

Transmembrane regions (helical) follow at residues 15 to 35 (LILC…FSFF), 38 to 58 (GVFA…TSIW), 60 to 80 (AFLW…YWIP), 92 to 112 (FVSI…FFLF), 128 to 148 (YILL…FQIF), 168 to 188 (ICGV…FLIL), and 204 to 224 (IASL…IGYI). The region spanning 236–538 (LSVLMIQPDT…TGTRAFSIRL (303 aa)) is the CN hydrolase domain. Residue glutamate 285 is the Proton acceptor of the active site. Lysine 355 is a catalytic residue. The Nucleophile role is filled by cysteine 446. Residues 549–569 (FGNSFLWIFCILILISRLIFV) traverse the membrane as a helical segment.

This sequence belongs to the CN hydrolase family. Apolipoprotein N-acyltransferase subfamily.

The protein resides in the cell inner membrane. It catalyses the reaction N-terminal S-1,2-diacyl-sn-glyceryl-L-cysteinyl-[lipoprotein] + a glycerophospholipid = N-acyl-S-1,2-diacyl-sn-glyceryl-L-cysteinyl-[lipoprotein] + a 2-acyl-sn-glycero-3-phospholipid + H(+). It participates in protein modification; lipoprotein biosynthesis (N-acyl transfer). Its function is as follows. Catalyzes the phospholipid dependent N-acylation of the N-terminal cysteine of apolipoprotein, the last step in lipoprotein maturation. In Leptospira interrogans serogroup Icterohaemorrhagiae serovar copenhageni (strain Fiocruz L1-130), this protein is Apolipoprotein N-acyltransferase 1.